A 282-amino-acid polypeptide reads, in one-letter code: UDP-3-O-acyl-N-acetylglucosamine deacetylase (282 aa).

Zn(2+) contacts are provided by His81, His239, and Asp243. Catalysis depends on His266, which acts as the Proton donor.

It belongs to the LpxC family. Zn(2+) is required as a cofactor.

The catalysed reaction is a UDP-3-O-[(3R)-3-hydroxyacyl]-N-acetyl-alpha-D-glucosamine + H2O = a UDP-3-O-[(3R)-3-hydroxyacyl]-alpha-D-glucosamine + acetate. It functions in the pathway glycolipid biosynthesis; lipid IV(A) biosynthesis; lipid IV(A) from (3R)-3-hydroxytetradecanoyl-[acyl-carrier-protein] and UDP-N-acetyl-alpha-D-glucosamine: step 2/6. In terms of biological role, catalyzes the hydrolysis of UDP-3-O-myristoyl-N-acetylglucosamine to form UDP-3-O-myristoylglucosamine and acetate, the committed step in lipid A biosynthesis. The chain is UDP-3-O-acyl-N-acetylglucosamine deacetylase from Chlamydia pneumoniae (Chlamydophila pneumoniae).